The primary structure comprises 229 residues: Transcriptional regulatory protein YxdJ (229 aa).

A Response regulatory domain is found at 3-116; that stretch reads KIMIVEDSED…IVLAKIKSQI (114 aa). Residue Asp52 is modified to 4-aspartylphosphate. The ompR/PhoB-type DNA-binding region spans 129-227; that stretch reads EKVVEYAGVQ…VRGEGYQLRA (99 aa).

Post-translationally, phosphorylated by YxdK.

The protein resides in the cytoplasm. Functionally, probable member of the two-component regulatory system YxdK/YxdJ. Positively regulates the expression of the yxdLMyxeA operon by direct interaction with its promoter region. Could also indirectly regulate the expression of the dlt operon. The protein is Transcriptional regulatory protein YxdJ (yxdJ) of Bacillus subtilis (strain 168).